The sequence spans 159 residues: Ribosomal RNA large subunit methyltransferase H (159 aa).

Positions 76 and 108 each coordinate S-adenosyl-L-methionine.

The protein belongs to the RNA methyltransferase RlmH family. As to quaternary structure, homodimer.

It localises to the cytoplasm. It catalyses the reaction pseudouridine(1915) in 23S rRNA + S-adenosyl-L-methionine = N(3)-methylpseudouridine(1915) in 23S rRNA + S-adenosyl-L-homocysteine + H(+). In terms of biological role, specifically methylates the pseudouridine at position 1915 (m3Psi1915) in 23S rRNA. The sequence is that of Ribosomal RNA large subunit methyltransferase H from Finegoldia magna (strain ATCC 29328 / DSM 20472 / WAL 2508) (Peptostreptococcus magnus).